The chain runs to 105 residues: Phosphoribosyl-ATP pyrophosphatase (105 aa).

This sequence belongs to the PRA-PH family.

The protein localises to the cytoplasm. The catalysed reaction is 1-(5-phospho-beta-D-ribosyl)-ATP + H2O = 1-(5-phospho-beta-D-ribosyl)-5'-AMP + diphosphate + H(+). It functions in the pathway amino-acid biosynthesis; L-histidine biosynthesis; L-histidine from 5-phospho-alpha-D-ribose 1-diphosphate: step 2/9. This is Phosphoribosyl-ATP pyrophosphatase from Ruegeria sp. (strain TM1040) (Silicibacter sp.).